We begin with the raw amino-acid sequence, 369 residues long: Aminomethyltransferase (369 aa).

This sequence belongs to the GcvT family. As to quaternary structure, the glycine cleavage system is composed of four proteins: P, T, L and H.

It catalyses the reaction N(6)-[(R)-S(8)-aminomethyldihydrolipoyl]-L-lysyl-[protein] + (6S)-5,6,7,8-tetrahydrofolate = N(6)-[(R)-dihydrolipoyl]-L-lysyl-[protein] + (6R)-5,10-methylene-5,6,7,8-tetrahydrofolate + NH4(+). In terms of biological role, the glycine cleavage system catalyzes the degradation of glycine. The chain is Aminomethyltransferase from Synechococcus sp. (strain CC9311).